The primary structure comprises 357 residues: Protein RecA (357 aa).

Position 67-74 (67-74 (GPESSGKT)) interacts with ATP. Residues 335–357 (LSSSASDDENSEGNVDFETGEVF) form a disordered region.

Belongs to the RecA family.

The protein localises to the cytoplasm. Can catalyze the hydrolysis of ATP in the presence of single-stranded DNA, the ATP-dependent uptake of single-stranded DNA by duplex DNA, and the ATP-dependent hybridization of homologous single-stranded DNAs. It interacts with LexA causing its activation and leading to its autocatalytic cleavage. The polypeptide is Protein RecA (Shewanella sp. (strain MR-4)).